Reading from the N-terminus, the 256-residue chain is Ribonuclease 3 (256 aa).

The RNase III domain maps to Leu6–Gly128. Position 41 (Glu41) interacts with Mg(2+). Asp45 is a catalytic residue. Mg(2+)-binding residues include Asp114 and Glu117. The active site involves Glu117. Residues Asp155–Ala225 enclose the DRBM domain.

The protein belongs to the ribonuclease III family. In terms of assembly, homodimer. It depends on Mg(2+) as a cofactor.

The protein resides in the cytoplasm. The catalysed reaction is Endonucleolytic cleavage to 5'-phosphomonoester.. Digests double-stranded RNA. Involved in the processing of primary rRNA transcript to yield the immediate precursors to the large and small rRNAs (23S and 16S). Processes some mRNAs, and tRNAs when they are encoded in the rRNA operon. Processes pre-crRNA and tracrRNA of type II CRISPR loci if present in the organism. The chain is Ribonuclease 3 from Bordetella bronchiseptica (strain ATCC BAA-588 / NCTC 13252 / RB50) (Alcaligenes bronchisepticus).